The primary structure comprises 196 residues: Peptide methionine sulfoxide reductase (196 aa).

Positions 1–14 (MEGNNSSSKSTTNP) are enriched in polar residues. A disordered region spans residues 1 to 23 (MEGNNSSSKSTTNPALDPDLDSP).

The protein belongs to the MsrA Met sulfoxide reductase family.

It carries out the reaction L-methionyl-[protein] + [thioredoxin]-disulfide + H2O = L-methionyl-(S)-S-oxide-[protein] + [thioredoxin]-dithiol. The catalysed reaction is [thioredoxin]-disulfide + L-methionine + H2O = L-methionine (S)-S-oxide + [thioredoxin]-dithiol. Functionally, has an important function as a repair enzyme for proteins that have been inactivated by oxidation. Catalyzes the reversible oxidation-reduction of methionine sulfoxide in proteins to methionine. This Solanum lycopersicum (Tomato) protein is Peptide methionine sulfoxide reductase (E4).